We begin with the raw amino-acid sequence, 305 residues long: Phosphatidate cytidylyltransferase (305 aa).

Transmembrane regions (helical) follow at residues 24–44 (LLVF…AFIV), 97–117 (PEHV…HLVF), 124–144 (LGPI…SVPI), 151–171 (LYGF…IFLI), 202–222 (TVVG…IFYS), 232–252 (IAMP…GFFG), and 277–297 (MLDV…ILLI).

This sequence belongs to the CDS family.

The protein resides in the cell membrane. The enzyme catalyses a 1,2-diacyl-sn-glycero-3-phosphate + CTP + H(+) = a CDP-1,2-diacyl-sn-glycerol + diphosphate. The protein operates within phospholipid metabolism; CDP-diacylglycerol biosynthesis; CDP-diacylglycerol from sn-glycerol 3-phosphate: step 3/3. The polypeptide is Phosphatidate cytidylyltransferase (cdsA) (Chlamydia muridarum (strain MoPn / Nigg)).